The following is a 68-amino-acid chain: Copper transport protein ATOX1 (68 aa).

One can recognise an HMA domain in the interval 1–63 (MPKHEFSVDM…TLEKTGKAVS (63 aa)). Residues cysteine 12 and cysteine 15 each contribute to the Cu cation site. Serine 47 is modified (phosphoserine). Position 60 is an N6-acetyllysine (lysine 60).

It belongs to the ATX1 family. In terms of assembly, homodimer. Interacts with ATP7B. Interacts with ATP7A. Interacts (via dimer form) with SLC31A1 (via C-terminal domain); this interaction improves ATOX1 stability and controls intracellular Cu(I) levels.

In terms of biological role, binds and deliver cytosolic copper to the copper ATPase proteins. May be important in cellular antioxidant defense. In Canis lupus familiaris (Dog), this protein is Copper transport protein ATOX1.